Here is an 898-residue protein sequence, read N- to C-terminus: Phosphoenolpyruvate carboxylase (898 aa).

Catalysis depends on residues histidine 138 and lysine 561.

It belongs to the PEPCase type 1 family. It depends on Mg(2+) as a cofactor.

The catalysed reaction is oxaloacetate + phosphate = phosphoenolpyruvate + hydrogencarbonate. Forms oxaloacetate, a four-carbon dicarboxylic acid source for the tricarboxylic acid cycle. This is Phosphoenolpyruvate carboxylase from Streptococcus pneumoniae serotype 2 (strain D39 / NCTC 7466).